Reading from the N-terminus, the 302-residue chain is Nudix hydrolase 22, chloroplastic (302 aa).

The N-terminal 25 residues, 1-25 (MKSGASAASPTAKSFNFGSSRLLAL), are a transit peptide targeting the chloroplast. Residues 73 to 229 (PKKAAVLICL…DSDYVIWGLT (157 aa)) enclose the Nudix hydrolase domain. The Nudix box signature appears at 114–135 (KAEEHDKDDGITATREAEEEIG). Mg(2+) contacts are provided by Glu129 and Glu133.

The protein belongs to the Nudix hydrolase family. Mg(2+) is required as a cofactor. Requires Mn(2+) as cofactor. Expressed in roots, leaves, stems and inflorescences.

It is found in the plastid. It localises to the chloroplast. In terms of biological role, probably mediates the hydrolysis of some nucleoside diphosphate derivatives. This Arabidopsis thaliana (Mouse-ear cress) protein is Nudix hydrolase 22, chloroplastic (NUDT22).